Reading from the N-terminus, the 333-residue chain is Beta-ketoacyl-[acyl-carrier-protein] synthase III (333 aa).

Catalysis depends on residues Cys114 and His255. Positions 256 to 260 are ACP-binding; that stretch reads QANYR. Asn285 is an active-site residue.

This sequence belongs to the thiolase-like superfamily. FabH family. Homodimer.

It is found in the cytoplasm. The enzyme catalyses malonyl-[ACP] + acetyl-CoA + H(+) = 3-oxobutanoyl-[ACP] + CO2 + CoA. Its pathway is lipid metabolism; fatty acid biosynthesis. Catalyzes the condensation reaction of fatty acid synthesis by the addition to an acyl acceptor of two carbons from malonyl-ACP. Catalyzes the first condensation reaction which initiates fatty acid synthesis and may therefore play a role in governing the total rate of fatty acid production. Possesses both acetoacetyl-ACP synthase and acetyl transacylase activities. Its substrate specificity determines the biosynthesis of branched-chain and/or straight-chain of fatty acids. In Aliarcobacter butzleri (strain RM4018) (Arcobacter butzleri), this protein is Beta-ketoacyl-[acyl-carrier-protein] synthase III.